Here is a 299-residue protein sequence, read N- to C-terminus: Rhodanese-like/PpiC domain-containing protein 12, chloroplastic (299 aa).

Residues 1-81 constitute a chloroplast transit peptide; that stretch reads MFRVTGTLSA…SGFPALKMRA (81 aa). Ser82 bears the N-acetylserine mark. In terms of domain architecture, PpiC spans 93–183; the sequence is SREILVQHLL…FGLHLLQVLS (91 aa). Residues 205 to 297 enclose the Rhodanese domain; that stretch reads FMDEAQLIDV…YSLKVDPSIP (93 aa). Catalysis depends on Cys257, which acts as the Cysteine persulfide intermediate.

It is found in the plastid. Its subcellular location is the chloroplast. In Arabidopsis thaliana (Mouse-ear cress), this protein is Rhodanese-like/PpiC domain-containing protein 12, chloroplastic.